The primary structure comprises 624 residues: DNA-directed RNA polymerase subunit gamma (624 aa).

Positions 70, 72, 85, and 88 each coordinate Zn(2+). Mg(2+) is bound by residues Asp466, Asp468, and Asp470.

It belongs to the RNA polymerase beta' chain family. RpoC1 subfamily. In terms of assembly, in cyanobacteria the RNAP catalytic core is composed of 2 alpha, 1 beta, 1 beta', 1 gamma and 1 omega subunit. When a sigma factor is associated with the core the holoenzyme is formed, which can initiate transcription. Requires Mg(2+) as cofactor. It depends on Zn(2+) as a cofactor.

The catalysed reaction is RNA(n) + a ribonucleoside 5'-triphosphate = RNA(n+1) + diphosphate. In terms of biological role, DNA-dependent RNA polymerase catalyzes the transcription of DNA into RNA using the four ribonucleoside triphosphates as substrates. The protein is DNA-directed RNA polymerase subunit gamma of Synechococcus sp. (strain ATCC 27144 / PCC 6301 / SAUG 1402/1) (Anacystis nidulans).